A 249-amino-acid polypeptide reads, in one-letter code: tRNA (guanine-N(1)-)-methyltransferase (249 aa).

S-adenosyl-L-methionine is bound by residues Gly117 and 137–142 (LGDFVL).

It belongs to the RNA methyltransferase TrmD family. As to quaternary structure, homodimer.

It localises to the cytoplasm. It carries out the reaction guanosine(37) in tRNA + S-adenosyl-L-methionine = N(1)-methylguanosine(37) in tRNA + S-adenosyl-L-homocysteine + H(+). Its function is as follows. Specifically methylates guanosine-37 in various tRNAs. The sequence is that of tRNA (guanine-N(1)-)-methyltransferase from Janthinobacterium sp. (strain Marseille) (Minibacterium massiliensis).